A 215-amino-acid chain; its full sequence is Cytochrome b6 (215 aa).

The chain crosses the membrane as a helical span at residues 32–52 (IFYCLGGITLTCFLVQVATGF). Cys-35 contributes to the heme c binding site. 2 residues coordinate heme b: His-86 and His-100. Helical transmembrane passes span 90 to 110 (ASMM…TGGF), 116 to 136 (LTWV…VTGY), and 186 to 206 (LHTF…FPMI). Residues His-187 and His-202 each coordinate heme b.

Belongs to the cytochrome b family. PetB subfamily. The 4 large subunits of the cytochrome b6-f complex are cytochrome b6, subunit IV (17 kDa polypeptide, PetD), cytochrome f and the Rieske protein, while the 4 small subunits are PetG, PetL, PetM and PetN. The complex functions as a dimer. It depends on heme b as a cofactor. Heme c is required as a cofactor.

It localises to the plastid. The protein resides in the chloroplast thylakoid membrane. In terms of biological role, component of the cytochrome b6-f complex, which mediates electron transfer between photosystem II (PSII) and photosystem I (PSI), cyclic electron flow around PSI, and state transitions. The protein is Cytochrome b6 of Solanum bulbocastanum (Wild potato).